The primary structure comprises 205 residues: Small ribosomal subunit protein uS4 (205 aa).

Positions 1 to 16 (MSKRESSKYKIDRRMG) are enriched in basic and acidic residues. A disordered region spans residues 1–46 (MSKRESSKYKIDRRMGENIWGRPKSPVNRREYGPGQHGQRRKSKLS). Residues 94–157 (SRLDAIVYRA…KQLVSVLESV (64 aa)) form the S4 RNA-binding domain.

This sequence belongs to the universal ribosomal protein uS4 family. As to quaternary structure, part of the 30S ribosomal subunit. Contacts protein S5. The interaction surface between S4 and S5 is involved in control of translational fidelity.

Functionally, one of the primary rRNA binding proteins, it binds directly to 16S rRNA where it nucleates assembly of the body of the 30S subunit. In terms of biological role, with S5 and S12 plays an important role in translational accuracy. The chain is Small ribosomal subunit protein uS4 from Sinorhizobium fredii (strain NBRC 101917 / NGR234).